Here is a 374-residue protein sequence, read N- to C-terminus: Chaperone protein DnaJ (374 aa).

One can recognise a J domain in the interval 5–70 (DYYEVLGVSK…QKRAAYDQYG (66 aa)). The CR-type zinc-finger motif lies at 132–210 (GTTVKIRVPT…CHGHGRVEET (79 aa)). Cysteine 145, cysteine 148, cysteine 162, cysteine 165, cysteine 184, cysteine 187, cysteine 198, and cysteine 201 together coordinate Zn(2+). CXXCXGXG motif repeat units lie at residues 145-152 (CKPCGGSG), 162-169 (CTTCGGHG), 184-191 (CPNCRGQG), and 198-205 (CKECHGHG).

This sequence belongs to the DnaJ family. In terms of assembly, homodimer. Zn(2+) is required as a cofactor.

It is found in the cytoplasm. In terms of biological role, participates actively in the response to hyperosmotic and heat shock by preventing the aggregation of stress-denatured proteins and by disaggregating proteins, also in an autonomous, DnaK-independent fashion. Unfolded proteins bind initially to DnaJ; upon interaction with the DnaJ-bound protein, DnaK hydrolyzes its bound ATP, resulting in the formation of a stable complex. GrpE releases ADP from DnaK; ATP binding to DnaK triggers the release of the substrate protein, thus completing the reaction cycle. Several rounds of ATP-dependent interactions between DnaJ, DnaK and GrpE are required for fully efficient folding. Also involved, together with DnaK and GrpE, in the DNA replication of plasmids through activation of initiation proteins. This is Chaperone protein DnaJ from Saccharophagus degradans (strain 2-40 / ATCC 43961 / DSM 17024).